Consider the following 865-residue polypeptide: General transcription factor 3C polypeptide 5 (865 aa).

5 disordered regions span residues 1–21 (MNDE…NNNS), 111–163 (RPNK…NEKF), 191–215 (NNNT…TVPI), 391–522 (QDNH…NKEG), and 669–865 (DNKM…EESE). 5 stretches are compositionally biased toward low complexity: residues 7–21 (KNNS…NNNS), 115–126 (QQTQTQTQTQTQ), 140–158 (QSPK…QQPQ), 199–210 (DNVNDSSSSSSS), and 401–411 (SKNNNNNNNNK). 2 stretches are compositionally biased toward basic and acidic residues: residues 412–439 (DSIK…KQEE) and 448–489 (NNEK…KGDD). 2 stretches are compositionally biased toward low complexity: residues 508–521 (EGNN…NNKE) and 677–696 (RSNT…PKST). Composition is skewed to basic and acidic residues over residues 697 to 713 (QPKE…EPRP), 757 to 766 (QNKEIDESLK), and 773 to 786 (MEKD…KNEE). Composition is skewed to acidic residues over residues 800-820 (DYDD…DFDG) and 839-865 (EDSE…EESE).

The protein belongs to the TFIIIC subunit 5 family. As to quaternary structure, part of the TFIIIC complex.

It is found in the nucleus. Involved in RNA polymerase III-mediated transcription. Integral, tightly associated component of the DNA-binding TFIIIC2 subcomplex that directly binds tRNA and virus-associated RNA promoters. The sequence is that of General transcription factor 3C polypeptide 5 (gtf3c5) from Dictyostelium discoideum (Social amoeba).